The primary structure comprises 109 residues: Thioredoxin (109 aa).

The region spanning 2-109 is the Thioredoxin domain; that stretch reads TNCIVELTDG…LKDFLNLYLK (108 aa). Cysteine 33 and cysteine 36 are oxidised to a cystine.

It belongs to the thioredoxin family.

Functionally, participates in various redox reactions through the reversible oxidation of its active center dithiol to a disulfide and catalyzes dithiol-disulfide exchange reactions. This chain is Thioredoxin (trxA), found in Buchnera aphidicola subsp. Baizongia pistaciae (strain Bp).